Here is a 344-residue protein sequence, read N- to C-terminus: N-acetyl-gamma-glutamyl-phosphate reductase (344 aa).

Residue cysteine 150 is part of the active site.

It belongs to the NAGSA dehydrogenase family. Type 1 subfamily.

Its subcellular location is the cytoplasm. It catalyses the reaction N-acetyl-L-glutamate 5-semialdehyde + phosphate + NADP(+) = N-acetyl-L-glutamyl 5-phosphate + NADPH + H(+). It participates in amino-acid biosynthesis; L-arginine biosynthesis; N(2)-acetyl-L-ornithine from L-glutamate: step 3/4. Functionally, catalyzes the NADPH-dependent reduction of N-acetyl-5-glutamyl phosphate to yield N-acetyl-L-glutamate 5-semialdehyde. The protein is N-acetyl-gamma-glutamyl-phosphate reductase of Azotobacter vinelandii (strain DJ / ATCC BAA-1303).